A 1190-amino-acid polypeptide reads, in one-letter code: ATPase histone chaperone abo1 (1190 aa).

Residues 1-11 (MKEEASEHGGS) show a composition bias toward basic and acidic residues. Disordered regions lie at residues 1-185 (MKEE…RKTH) and 204-253 (YIDS…DLAD). 2 stretches are compositionally biased toward acidic residues: residues 52-62 (QEDEGDEDWEE) and 82-106 (SEGD…DSED). Residues 112–131 (VRSKPKYKPGTRRSTRLRNR) show a composition bias toward basic residues. Basic and acidic residues predominate over residues 141–152 (EEHRPILRERTS). Position 309-314 (309-314 (PGTGKT)) interacts with ATP. Positions 794–922 (RLLNKLKIKL…ANVLLGVEDM (129 aa)) constitute a Bromo domain.

The protein belongs to the AAA ATPase family. Homohexamer. Interacts with the FACT complex subunits spt16 and pob3. Interacts with histone H3-H4 (via N-terminus).

It localises to the nucleus. The protein localises to the chromosome. The enzyme catalyses ATP + H2O = ADP + phosphate + H(+). Functionally, ATPase histone chaperone which facilitates loading of histone H3-H4 onto DNA in an ATP-dependent manner. Plays a genome-wide role in nucleosome organization and establishment of chromatin. Also plays a role in heterochromatin assembly by stabilizing recruitment of the histone methyltransferase clr4 to methylated histone H3, to promote the transition from H3K9me2 to H3K9me3. The polypeptide is ATPase histone chaperone abo1 (Schizosaccharomyces pombe (strain 972 / ATCC 24843) (Fission yeast)).